A 61-amino-acid polypeptide reads, in one-letter code: Small ribosomal subunit protein uS14 (61 aa).

Zn(2+) contacts are provided by cysteine 24, cysteine 27, cysteine 40, and cysteine 43.

The protein belongs to the universal ribosomal protein uS14 family. Zinc-binding uS14 subfamily. As to quaternary structure, part of the 30S ribosomal subunit. Contacts proteins S3 and S10. Zn(2+) serves as cofactor.

In terms of biological role, binds 16S rRNA, required for the assembly of 30S particles and may also be responsible for determining the conformation of the 16S rRNA at the A site. The protein is Small ribosomal subunit protein uS14 of Bifidobacterium longum (strain DJO10A).